A 230-amino-acid chain; its full sequence is Large ribosomal subunit protein uL1 (230 aa).

It belongs to the universal ribosomal protein uL1 family. As to quaternary structure, part of the 50S ribosomal subunit.

In terms of biological role, binds directly to 23S rRNA. The L1 stalk is quite mobile in the ribosome, and is involved in E site tRNA release. Protein L1 is also a translational repressor protein, it controls the translation of the L11 operon by binding to its mRNA. The polypeptide is Large ribosomal subunit protein uL1 (Rhodopseudomonas palustris (strain BisB18)).